A 272-amino-acid polypeptide reads, in one-letter code: Ribosomal RNA small subunit methyltransferase A (272 aa).

Residues N16, L18, G43, E64, D89, and N110 each coordinate S-adenosyl-L-methionine.

Belongs to the class I-like SAM-binding methyltransferase superfamily. rRNA adenine N(6)-methyltransferase family. RsmA subfamily.

It localises to the cytoplasm. It catalyses the reaction adenosine(1518)/adenosine(1519) in 16S rRNA + 4 S-adenosyl-L-methionine = N(6)-dimethyladenosine(1518)/N(6)-dimethyladenosine(1519) in 16S rRNA + 4 S-adenosyl-L-homocysteine + 4 H(+). Its function is as follows. Specifically dimethylates two adjacent adenosines (A1518 and A1519) in the loop of a conserved hairpin near the 3'-end of 16S rRNA in the 30S particle. May play a critical role in biogenesis of 30S subunits. This is Ribosomal RNA small subunit methyltransferase A from Pseudomonas fluorescens (strain Pf0-1).